The following is a 327-amino-acid chain: tRNA U34 carboxymethyltransferase (327 aa).

Residues K91, W105, K110, G130, I181 to E182, M196, Y200, and R315 contribute to the carboxy-S-adenosyl-L-methionine site.

The protein belongs to the class I-like SAM-binding methyltransferase superfamily. CmoB family. Homotetramer.

The enzyme catalyses carboxy-S-adenosyl-L-methionine + 5-hydroxyuridine(34) in tRNA = 5-carboxymethoxyuridine(34) in tRNA + S-adenosyl-L-homocysteine + H(+). In terms of biological role, catalyzes carboxymethyl transfer from carboxy-S-adenosyl-L-methionine (Cx-SAM) to 5-hydroxyuridine (ho5U) to form 5-carboxymethoxyuridine (cmo5U) at position 34 in tRNAs. This is tRNA U34 carboxymethyltransferase from Pectobacterium atrosepticum (strain SCRI 1043 / ATCC BAA-672) (Erwinia carotovora subsp. atroseptica).